Consider the following 450-residue polypeptide: MFKSMISSIVMRSMQKKINAQTISETDVQAVLKEIRIALLDADVNLLVVKNFIKAIREQTVGQTVEPGQDLQKWLLKVIKQELINILSQPNQEITSKRPLKVMVVGLQGSGKTTTCGKLAVWLKKQFQQKAMLVALDIYRPAAIDQLATLAEQTESVFFAKGTQAPDQTTKEAVKTFKESGCQAIICDTAGRLQTNQELMDELVAIKNELHPDEILMVVDGLSGQEIINVAKEFHNRLKLTGFIITKLDSDARAGAALSLTSLLEVPIKLMGTSEKLTGLEQFHPERIASRILGLGDVMTLVEKAEEVFDKQSLTKTVSKMFLGKMDLEDLLLYMEQMNQMGSVSSIVKMLPGNLTVSDDHVESIEAKVKLWKVLINSMTREERRHPKLINRDPSRKQRIIKGSGRKMDELNKLMKEWSKLQTKTAEMGRMLKGGKNPFSGFGGLGGLGF.

GTP-binding positions include 106–113 (GLQGSGKT), 188–192 (DTAGR), and 246–249 (TKLD).

It belongs to the GTP-binding SRP family. SRP54 subfamily. In terms of assembly, part of the signal recognition particle protein translocation system, which is composed of SRP and FtsY.

The protein localises to the cytoplasm. It carries out the reaction GTP + H2O = GDP + phosphate + H(+). Its function is as follows. Involved in targeting and insertion of nascent membrane proteins into the cytoplasmic membrane. Binds to the hydrophobic signal sequence of the ribosome-nascent chain (RNC) as it emerges from the ribosomes. The SRP-RNC complex is then targeted to the cytoplasmic membrane where it interacts with the SRP receptor FtsY. In Mycoplasma pneumoniae (strain ATCC 29342 / M129 / Subtype 1) (Mycoplasmoides pneumoniae), this protein is Signal recognition particle protein.